A 64-amino-acid polypeptide reads, in one-letter code: Short neurotoxin 1 (64 aa).

4 disulfides stabilise this stretch: Cys-3/Cys-26, Cys-20/Cys-43, Cys-45/Cys-56, and Cys-57/Cys-62.

Belongs to the three-finger toxin family. Short-chain subfamily. Type I alpha-neurotoxin sub-subfamily. In terms of tissue distribution, expressed by the venom gland.

The protein localises to the secreted. Binds to muscle nicotinic acetylcholine receptor (nAChR) and inhibit acetylcholine from binding to the receptor, thereby impairing neuromuscular transmission. This Bungarus fasciatus (Banded krait) protein is Short neurotoxin 1.